We begin with the raw amino-acid sequence, 279 residues long: Urease accessory protein UreD (279 aa).

This sequence belongs to the UreD family. In terms of assembly, ureD, UreF and UreG form a complex that acts as a GTP-hydrolysis-dependent molecular chaperone, activating the urease apoprotein by helping to assemble the nickel containing metallocenter of UreC. The UreE protein probably delivers the nickel.

The protein localises to the cytoplasm. Required for maturation of urease via the functional incorporation of the urease nickel metallocenter. The polypeptide is Urease accessory protein UreD (Streptococcus thermophilus (strain ATCC BAA-250 / LMG 18311)).